The sequence spans 235 residues: Transcription factor hepR (235 aa).

Residues 14-45 form a disordered region; sequence QNSPESSRDVLSMASPGLLPIDPSPEHDETNK. The C2H2-type zinc-finger motif lies at 175-205; that stretch reads IQCPCLDERGERCSRMFSRLDNMRDHVRRIH.

It is found in the nucleus. In terms of biological role, transcription factor; part of the gene cluster that mediates the biosynthesis of heptelidic acid (HA), a sesquiterpene lactone that acts as an inhibitor of glyceraldehyde-3-phosphatedehydrogenase (GAPDH) and a growth inhibitor of the salt-tolerant lactic acid bacteria in soy sauce brewing. Both hepR and hepS regulate the transcription of the heptelidic acid cluster, but they are not involved in mutual transcriptional regulation and act with different mechanisms. The sequence is that of Transcription factor hepR from Aspergillus oryzae (strain ATCC 42149 / RIB 40) (Yellow koji mold).